The primary structure comprises 178 residues: Caveolin-1 (178 aa).

N-acetylserine is present on Ser2. At Ser2 the chain carries Phosphoserine. The interval 2 to 94 (SGGKYVDSEG…WKASFTTFTV (93 aa)) is required for homooligomerization. Over 2-104 (SGGKYVDSEG…TKYWFYRLLS (103 aa)) the chain is Cytoplasmic. Lys5 is modified (N6-acetyllysine; alternate). Lys5 is covalently cross-linked (Glycyl lysine isopeptide (Lys-Gly) (interchain with G-Cter in ubiquitin); alternate). A Phosphotyrosine modification is found at Tyr6. Ser9 carries the phosphoserine modification. Tyr14 carries the post-translational modification Phosphotyrosine; by ABL1. Tyr25 carries the post-translational modification Phosphotyrosine. Glycyl lysine isopeptide (Lys-Gly) (interchain with G-Cter in ubiquitin) cross-links involve residues Lys26, Lys30, Lys39, Lys47, and Lys57. The interaction with CAVIN3 stretch occupies residues 82–94 (DGIWKASFTTFTV). An intramembrane region (helical) is located at residues 105–125 (TIFGIPMALIWGIYFAILSFL). Residues 126 to 178 (HIWAVVPCIKSFLIEIQCISRVYSIYVHTFCDPLFEAIGKIFSNVRISMQKEI) lie on the Cytoplasmic side of the membrane. The interval 131–142 (VPCIKSFLIEIQ) is interacts with SPRY1, SPRY2, SPRY3 and SPRY4. 3 S-palmitoyl cysteine lipidation sites follow: Cys133, Cys143, and Cys156. The interval 149–160 (SIYVHTFCDPLF) is interacts with SPRY1, SPRY2, and SPRY4. An interacts with SPRY1, SPRY2, SPRY3 and SPRY4 region spans residues 167 to 178 (FSNVRISMQKEI).

The protein belongs to the caveolin family. As to quaternary structure, homooligomer. Interacts with GLIPR2. Interacts with NOSTRIN. Interacts with SNAP25 and STX1A. Interacts (via the N-terminus) with DPP4; the interaction is direct. Interacts with CTNNB1, CDH1 and JUP. Interacts with PACSIN2; this interaction induces membrane tubulation. Interacts with SLC7A9. Interacts with BMX and BTK. Interacts with TGFBR1. Interacts with CAVIN3 (via leucine-zipper domain) in a cholesterol-sensitive manner. Interacts with CAVIN1. Interacts with EHD2 in a cholesterol-dependent manner. Forms a ternary complex with UBXN6 and VCP; mediates CAV1 targeting to lysosomes for degradation. Interacts with ABCG1; this interaction regulates ABCG1-mediated cholesterol efflux. Interacts with NEU3; this interaction enhances NEU3 sialidase activity within caveola. Interacts (via C-terminus) with SPRY1, SPRY2 (via C-terminus), SPRY3, and SPRY4. Interacts with IGFBP5; this interaction allows trafficking of IGFBP5 from the plasma membrane to the nucleus. In terms of processing, phosphorylated at Tyr-14 by ABL1 in response to oxidative stress. Post-translationally, ubiquitinated. Undergo monoubiquitination and multi- and/or polyubiquitination. Monoubiquitination of N-terminal lysines promotes integration in a ternary complex with UBXN6 and VCP which promotes oligomeric CAV1 targeting to lysosomes for degradation. Ubiquitinated by ZNRF1; leading to degradation and modulation of the TLR4-mediated immune response.

It is found in the golgi apparatus membrane. It localises to the cell membrane. The protein resides in the membrane. The protein localises to the caveola. Its subcellular location is the membrane raft. Its function is as follows. May act as a scaffolding protein within caveolar membranes. Forms a stable heterooligomeric complex with CAV2 that targets to lipid rafts and drives caveolae formation. Mediates the recruitment of CAVIN proteins (CAVIN1/2/3/4) to the caveolae. Interacts directly with G-protein alpha subunits and can functionally regulate their activity. Involved in the costimulatory signal essential for T-cell receptor (TCR)-mediated T-cell activation. Its binding to DPP4 induces T-cell proliferation and NF-kappa-B activation in a T-cell receptor/CD3-dependent manner. Recruits CTNNB1 to caveolar membranes and may regulate CTNNB1-mediated signaling through the Wnt pathway. Negatively regulates TGFB1-mediated activation of SMAD2/3 by mediating the internalization of TGFBR1 from membrane rafts leading to its subsequent degradation. Binds 20(S)-hydroxycholesterol (20(S)-OHC). This is Caveolin-1 (CAV1) from Oryctolagus cuniculus (Rabbit).